The sequence spans 489 residues: Ammonium transporter MEP3 (489 aa).

Topologically, residues 1 to 17 (MARGDGHLWTETYDSST) are extracellular. A helical transmembrane segment spans residues 18–38 (VAFMILGAALVFFMVPGLGFL). Residues 39 to 48 (YSGLARRKSA) are Cytoplasmic-facing. A helical transmembrane segment spans residues 49–69 (LALIWVVIMATLVGILQWYFW). Residues 70 to 108 (GYSLAFSKTATNNKFIGNLDSFGFRNVYGKISDDSTYPE) are Extracellular-facing. Residues 109–129 (LIYAIFQMMFMCVALSIIAGA) form a helical membrane-spanning segment. The Cytoplasmic portion of the chain corresponds to 130 to 139 (TAERGKLFPH). Residues 140-160 (MVFLFVFATLVYCPITYWIWA) traverse the membrane as a helical segment. Topologically, residues 161–173 (PGGWAYQWGVLDW) are extracellular. The chain crosses the membrane as a helical span at residues 174 to 194 (AGGGNIEILSAVAGFVYSYFL). Residues 195–209 (GRRKENLLINFRPHN) are Cytoplasmic-facing. Residues 210 to 230 (VSMVTLGTSILWFGWLLFNAA) form a helical membrane-spanning segment. The Extracellular segment spans residues 231–239 (SSLSPNMRS). Residues 240–260 (VYAFMNTCLSATTGGMTWCLL) form a helical membrane-spanning segment. Topologically, residues 261 to 267 (DYRSEKK) are cytoplasmic. Residues 268 to 288 (WSTVGLCSGIICGLVAATPSS) traverse the membrane as a helical segment. A topological domain (extracellular) is located at residue glycine 289. Residues 290 to 310 (CITLYGSLIQGIIAGVVCNFA) traverse the membrane as a helical segment. The Cytoplasmic segment spans residues 311 to 330 (TKIKYYLKVDDSLDLLAEHG). Residues 331-351 (IAGVVGLIFNALFAADWVIGM) traverse the membrane as a helical segment. At 352–372 (DGTTKHKGGWLTHNWKQMYIQ) the chain is on the extracellular side. Residues 373–393 (IAYIGASAGYCAVVTAIICFV) traverse the membrane as a helical segment. Topologically, residues 394-489 (LGKIPGVHLR…NPKLHHAKEA (96 aa)) are cytoplasmic. Residues 448 to 481 (GANSASETNPTEDSQNSSLSSATVSGQNEKSNNP) show a composition bias toward polar residues. The interval 448–489 (GANSASETNPTEDSQNSSLSSATVSGQNEKSNNPKLHHAKEA) is disordered.

This sequence belongs to the ammonia transporter channel (TC 1.A.11.2) family.

The protein resides in the membrane. Functionally, transporter for ammonium (both charged and uncharged NH3 and NH4) to use as a nitrogen source. The affinity of MEP2 is about twenty times higher than that of MEP1. MEP3 has the lowest affinity. The polypeptide is Ammonium transporter MEP3 (MEP3) (Saccharomyces cerevisiae (strain ATCC 204508 / S288c) (Baker's yeast)).